The following is a 493-amino-acid chain: Glycerol kinase (493 aa).

Thr11 is a binding site for ADP. 3 residues coordinate ATP: Thr11, Thr12, and Ser13. Residue Thr11 coordinates sn-glycerol 3-phosphate. Arg15 contributes to the ADP binding site. Sn-glycerol 3-phosphate is bound by residues Arg80, Glu81, Tyr132, and Asp241. Residues Arg80, Glu81, Tyr132, Asp241, and Gln242 each contribute to the glycerol site. The ADP site is built by Thr263 and Gly306. 4 residues coordinate ATP: Thr263, Gly306, Gln310, and Gly408. Gly408 contacts ADP.

The protein belongs to the FGGY kinase family.

It carries out the reaction glycerol + ATP = sn-glycerol 3-phosphate + ADP + H(+). It functions in the pathway polyol metabolism; glycerol degradation via glycerol kinase pathway; sn-glycerol 3-phosphate from glycerol: step 1/1. Its activity is regulated as follows. Inhibited by fructose 1,6-bisphosphate (FBP). Key enzyme in the regulation of glycerol uptake and metabolism. Catalyzes the phosphorylation of glycerol to yield sn-glycerol 3-phosphate. In Cereibacter sphaeroides (strain ATCC 17029 / ATH 2.4.9) (Rhodobacter sphaeroides), this protein is Glycerol kinase.